Reading from the N-terminus, the 406-residue chain is COP9 signalosome complex subunit 4 (406 aa).

A PCI domain is found at 197–366; sequence YRRKFIEAAQ…GIVHFETREP (170 aa).

This sequence belongs to the CSN4 family. In terms of assembly, component of the CSN complex, probably composed of cops1, cops2, cops3, cops4, cops5, cops6, cops7, cops8 and cops9.

The protein localises to the cytoplasm. It localises to the nucleus. Its subcellular location is the cytoplasmic vesicle. The protein resides in the secretory vesicle. It is found in the synaptic vesicle. Its function is as follows. Component of the COP9 signalosome complex (CSN), a complex involved in various cellular and developmental processes. The CSN complex is an essential regulator of the ubiquitin (Ubl) conjugation pathway by mediating the deneddylation of the cullin subunits of E3 ligase complexes, leading to modify the Ubl ligase activity. The polypeptide is COP9 signalosome complex subunit 4 (cops4) (Danio rerio (Zebrafish)).